Reading from the N-terminus, the 446-residue chain is Phosphoglucosamine mutase (446 aa).

S101 acts as the Phosphoserine intermediate in catalysis. Positions 101, 240, 242, and 244 each coordinate Mg(2+). Phosphoserine is present on S101.

It belongs to the phosphohexose mutase family. Requires Mg(2+) as cofactor. Activated by phosphorylation.

The enzyme catalyses alpha-D-glucosamine 1-phosphate = D-glucosamine 6-phosphate. Catalyzes the conversion of glucosamine-6-phosphate to glucosamine-1-phosphate. The chain is Phosphoglucosamine mutase from Coxiella burnetii (strain RSA 331 / Henzerling II).